A 226-amino-acid polypeptide reads, in one-letter code: Large ribosomal subunit protein uL1 (226 aa).

The protein belongs to the universal ribosomal protein uL1 family. Part of the 50S ribosomal subunit.

Its function is as follows. Binds directly to 23S rRNA. The L1 stalk is quite mobile in the ribosome, and is involved in E site tRNA release. In terms of biological role, protein L1 is also a translational repressor protein, it controls the translation of the L11 operon by binding to its mRNA. This is Large ribosomal subunit protein uL1 from Borreliella afzelii (strain PKo) (Borrelia afzelii).